Here is a 467-residue protein sequence, read N- to C-terminus: Glutamyl-tRNA reductase (467 aa).

Substrate-binding positions include 49 to 52 (TCNR), S109, 114 to 116 (EQQ), and Q120. C50 serves as the catalytic Nucleophile. 189-194 (GAGAMG) serves as a coordination point for NADP(+). The disordered stretch occupies residues 446–467 (GFSDTTRYGTSPAQSSSKYHAE). The span at 447 to 467 (FSDTTRYGTSPAQSSSKYHAE) shows a compositional bias: polar residues.

Belongs to the glutamyl-tRNA reductase family. In terms of assembly, homodimer.

The enzyme catalyses (S)-4-amino-5-oxopentanoate + tRNA(Glu) + NADP(+) = L-glutamyl-tRNA(Glu) + NADPH + H(+). It participates in porphyrin-containing compound metabolism; protoporphyrin-IX biosynthesis; 5-aminolevulinate from L-glutamyl-tRNA(Glu): step 1/2. Its function is as follows. Catalyzes the NADPH-dependent reduction of glutamyl-tRNA(Glu) to glutamate 1-semialdehyde (GSA). The polypeptide is Glutamyl-tRNA reductase (Mycobacterium leprae (strain TN)).